Here is a 141-residue protein sequence, read N- to C-terminus: Putative pre-16S rRNA nuclease (141 aa).

This sequence belongs to the YqgF nuclease family.

It localises to the cytoplasm. Its function is as follows. Could be a nuclease involved in processing of the 5'-end of pre-16S rRNA. The chain is Putative pre-16S rRNA nuclease from Cupriavidus pinatubonensis (strain JMP 134 / LMG 1197) (Cupriavidus necator (strain JMP 134)).